The following is a 136-amino-acid chain: Small ribosomal subunit protein eS17B (136 aa).

This sequence belongs to the eukaryotic ribosomal protein eS17 family. Component of the small ribosomal subunit (SSU). Mature yeast ribosomes consist of a small (40S) and a large (60S) subunit. The 40S small subunit contains 1 molecule of ribosomal RNA (18S rRNA) and 33 different proteins (encoded by 57 genes). The large 60S subunit contains 3 rRNA molecules (25S, 5.8S and 5S rRNA) and 46 different proteins (encoded by 81 genes).

The protein localises to the cytoplasm. Component of the ribosome, a large ribonucleoprotein complex responsible for the synthesis of proteins in the cell. The small ribosomal subunit (SSU) binds messenger RNAs (mRNAs) and translates the encoded message by selecting cognate aminoacyl-transfer RNA (tRNA) molecules. The large subunit (LSU) contains the ribosomal catalytic site termed the peptidyl transferase center (PTC), which catalyzes the formation of peptide bonds, thereby polymerizing the amino acids delivered by tRNAs into a polypeptide chain. The nascent polypeptides leave the ribosome through a tunnel in the LSU and interact with protein factors that function in enzymatic processing, targeting, and the membrane insertion of nascent chains at the exit of the ribosomal tunnel. The chain is Small ribosomal subunit protein eS17B from Saccharomyces cerevisiae (strain ATCC 204508 / S288c) (Baker's yeast).